The following is a 2517-amino-acid chain: MSTQRKDMWKLLYNHVNRNVSNFSGVYSVIEDILCQEPSLISCSLVRELHNKFQDTFLLWLLNKLAKCLSESPDSSECINLQRKILSSCCSNHPKLFERLVLAYVEAIEETHLQLSSLDLGQLSNERKPAITVRIFRCDVECLQEFDPHCAIEDIKVPLEQADMYAKSLLEVLQHAHHIGYATHGDIFSGSLHQALLILKECDMDTKLASLNYCHNVLRSQSASSWITNPDVGHYAQLTLEATAIMWSAVAKWLDMGCMTRQELKRLNITTKLLLEVLHMRARPAHHLGYLLLNEILSLPTAIELDDGLLETLSSYIQGQLEHSVVPLEQLVHLQQLMLSHWHCHPTHLVPILALMGLKQTEMRSGVVQVLTQSLVEILKKEEVLSKDWQKLIAILRGFKQLEKLILSQSQHKIAEHEGHIDSSVLAMLPLQCEIIKVADTNWNNLSMQLVELESKCSADRRHIHLEICSLLMQITFIRHFLKTQTQHQLLAILQRHLKLSYLCAIRLETPSSVHTQMQSFYAQQYMRLFQSEETQEIFCSNLPQLYISGFIKPEQLMKALPTINNRSGRAQVIRLLLCSQPGKLSVFKVKDRIELYCPKCRPLPKKLPGIYLGKCKQQLPCPDFSSTNLEMIANDLLFYPDFECIAQHLDLLCFEPNVILGLLRETEALQKVSVKVIGQLVSAMRVRSPEFLEQLANLVLAAIKAMLAKPLTEQNVLQQRSMLNVLTAIAHMEDNEIWLFHWFKMTFFFLVHTRSLVAQEAVLAATEMCASQGLQTIHLWNWYKRDALDLTVRLALNVYLLDGVRFTRSLRALTKMLGFTCVQEFTCKYHRLLTAMVLPHCIVNPLCKGVLVLIAKQMQKHIGTLFSISFLRIYTHVFLTEEPELANSCIELVVSCTQSSLQQLMNADVKQTVAELLIYFNRNPTFVMRSFQSLLQLSIGSLEELSSQTANAEFANFIAERFLGVITYFESCLSEPSFEKPLKEETLYSLGQIMRFVGSQHVTQFRFKIIAMLSFVHTLQEPRLQRICLKIWHIFLHVVNVQELGPSLGRIVATLQPLLADNESVKQVNDLYEFIILRNASMLGTFITDLYFLDRMENVSPSIQKCIRRHTAHLDLKGLAEEENQSPPLVDQLRFLQKHITDECLQVRVYALQHLGDLFGRRRPKLNSTILSELPLEPMLEQIVNVLMAGCQHDDSQLQMASAKCLGELGAIDASYLPSNYNFASPQHLPLNILSDDFAVLALTSLCRGYQFQQNTKHVDSFSLAIQETLAICGISPKEQKKVQLWQSLPARMRQLMEPMLHSCYTCVHRPSTCLQQPLFGSHYSHNYYEEWAFLWASRLIDYLPSSGRRHLLSSYKPCIKRDSNMLSTFYPYILLHALLECTTEQRNHIQEEFMAVLQANEESSSSVRGRQELGAIKENAFKQFESRKYAAGIKPLASTLVSDRKEDSSRVPRLAGKLCAELLDFLQRWLREWQRIHGRSTGGKPPETIDSNYRKIHEFLNLIPKLLVSRASYNCGEYARALSYLESYLEEGEDKSQRLLEQFTFLVEVYGSLRDPDSVEGAVQVRSYDMSVTQDILVNRLVERQQDMITSYEQLLSSTDQMQPDHVRAMIDAYLRDTPKTAQLIADGLWQRLSDRYSDQCFAECKSELLWRLGSYDEMEELQSNWPAQCSQGCLKLRRPLTTRIEFDSLLDGMRESVLEELRSCSAVQQHSYANAYDAVLKLHLVHELHCSQELVEKLEQDRDEDNQEKLMKNYFDDWQYRLQIVQPQVRIQESIYSFRRNILAELQRRLTDRNHLLPHLKTELARIWLNSAQINRNAGQLQRAQLYILKAAEYQPSGLFIERAKLLWQKGDQVMAMNYLEEQLSIMRSGCQGNVKQLAAEQRHLFFRGKYLQAVYSAESMHLCADAVLKYFQEAIAVHRQSESCHVQMAQFLEKILEARQGGKSEPTGEQDDMLINVMVNYAKSLRYGSEHVYQSMPRLISLWLDTTESSTNTEQVKKMNDLLTNCCTALPTAVFYTVYSQMLSRLCHPVNDVFTVLRNVIIKLVEAYPQQSLWMLLPHFKSAKAHRIKRCKLVLTDSRLQNSTFQKLLQDFNSLTERLMDLTNKEVTLDRTYKLSDLDTRLSKLCKQPEFSQILLPFEKYMQPTLPLNSDSNSSEGSHLPANQSTVNWFPYQQIYISGFQESVLILRSAAKPKKLTIRCSDGKDYDVLVKPKDDLRRDARLMEFNGLVKRYLHQDAPARQRRLHIRTYAVLPFNEECGLVEWLPNLASYRSICMNLYAQRRLVMSTRQLQSLAVPLHESIERKREVFTKQLVPAHPPVFQEWLRQRFATPHSWYEARNTYIRTVAVMSMVGYILGLGDRHGENILFAEGNGDAVHVDFNCLFNQGELLPYPEVVPFRLTHNMIVAMGPLGVEGSFRKCCEITLRLLKQESKTLMSILRPFVYDVGAQTRKGAATAKITKDVQRIADRLQGHVKRQQANSIPLSTEGQVNFLINEATKVDNLASMYIGWGAFL.

The HEAT repeat unit spans residues 1178 to 1214 (EPMLEQIVNVLMAGCQHDDSQLQMASAKCLGELGAID). Residues 1509–2066 (LVSRASYNCG…LWMLLPHFKS (558 aa)) form the FAT domain. Ser-1569 bears the Phosphoserine mark. A Phosphotyrosine modification is found at Tyr-1570. At Ser-1573 the chain carries Phosphoserine. Position 1575 is a phosphothreonine (Thr-1575). The region spanning 2184–2508 (FQESVLILRS…EATKVDNLAS (325 aa)) is the PI3K/PI4K catalytic domain. A G-loop region spans residues 2190–2196 (ILRSAAK). The segment at 2360–2368 (GLGDRHGEN) is catalytic loop. Residues 2380–2404 (HVDFNCLFNQGELLPYPEVVPFRLT) form an activation loop region. The region spanning 2485–2517 (IPLSTEGQVNFLINEATKVDNLASMYIGWGAFL) is the FATC domain.

Belongs to the PI3/PI4-kinase family. ATM subfamily. As to quaternary structure, interacts with mus304. The cofactor is Mn(2+).

It is found in the nucleus. It catalyses the reaction L-seryl-[protein] + ATP = O-phospho-L-seryl-[protein] + ADP + H(+). It carries out the reaction L-threonyl-[protein] + ATP = O-phospho-L-threonyl-[protein] + ADP + H(+). In terms of biological role, serine/threonine protein kinase which activates checkpoint signaling upon genotoxic stresses such as ionizing radiation (IR), ultraviolet light (UV), or DNA replication stalling, thereby acting as a DNA damage sensor. Recognizes the substrate consensus sequence [ST]-Q. Phosphorylates various proteins, which collectively inhibits DNA replication and mitosis and promotes DNA repair and recombination. Phosphorylates grp/CHK1. Phosphorylates 'Ser-137' of histone variant H2AX/H2AV at sites of DNA damage, thereby regulating DNA damage response mechanism. Essential for the DNA damage checkpoint in larval imaginal disks and neuroblasts and for the DNA replication checkpoint in the embryo. Also has an essential role during early nuclear divisions in embryos, where it is required to delay mitosis in response to incomplete DNA replication. Also plays an important role during meiosis, where it may monitor double-strand-break repair during meiotic crossing over, to regulate the progression of prophase I, and to enforce metaphase I delay observed at the end of oogenesis. Involved in telomere maintenance and prevention of telomere fusion; potentially functioning downstream of moi/modigliani. The sequence is that of Serine/threonine-protein kinase ATR (mei-41) from Drosophila melanogaster (Fruit fly).